The primary structure comprises 272 residues: tRNA pseudouridine synthase B (272 aa).

Asp38 acts as the Nucleophile in catalysis.

The protein belongs to the pseudouridine synthase TruB family. Type 1 subfamily.

It carries out the reaction uridine(55) in tRNA = pseudouridine(55) in tRNA. Functionally, responsible for synthesis of pseudouridine from uracil-55 in the psi GC loop of transfer RNAs. In Campylobacter jejuni subsp. jejuni serotype O:23/36 (strain 81-176), this protein is tRNA pseudouridine synthase B.